Here is a 99-residue protein sequence, read N- to C-terminus: Large ribosomal subunit protein bL28 (99 aa).

It belongs to the bacterial ribosomal protein bL28 family.

The polypeptide is Large ribosomal subunit protein bL28 (Brucella anthropi (strain ATCC 49188 / DSM 6882 / CCUG 24695 / JCM 21032 / LMG 3331 / NBRC 15819 / NCTC 12168 / Alc 37) (Ochrobactrum anthropi)).